The sequence spans 387 residues: Phosphoglycerate kinase (387 aa).

Substrate contacts are provided by residues 21 to 23, Arg36, 59 to 62, Arg113, and Arg146; these read DLN and HLGR. Residues Lys197, Glu314, and 340–343 each bind ATP; that span reads GGDT.

Belongs to the phosphoglycerate kinase family. Monomer.

It is found in the cytoplasm. The enzyme catalyses (2R)-3-phosphoglycerate + ATP = (2R)-3-phospho-glyceroyl phosphate + ADP. It functions in the pathway carbohydrate degradation; glycolysis; pyruvate from D-glyceraldehyde 3-phosphate: step 2/5. This is Phosphoglycerate kinase from Enterobacter sp. (strain 638).